Consider the following 1465-residue polypeptide: Vacuolar heme ABC transmembrane exporter abc3 (1465 aa).

At 1–8 (MITANKGL) the chain is on the extracellular side. A helical membrane pass occupies residues 9–29 (SLVLLIPNLFALVSGGLQYVF). Residues 30-42 (DVRRRIFRPHFSQ) are Cytoplasmic-facing. Residues 43-63 (FWTIWMKFFSIALVIITQIYV) traverse the membrane as a helical segment. The Extracellular portion of the chain corresponds to 64–69 (GYKTKN). The helical transmembrane segment at 70–90 (IGWNFFSVVTYCFVLFLQFAE) threads the bilayer. The Cytoplasmic segment spans residues 91–97 (QSTLRVP). The helical transmembrane segment at 98 to 118 (MASLLIFWLLKVVTSLLILLF) threads the bilayer. Over 119–129 (SPYIAITSMAR) the chain is Extracellular. Residues 130-150 (LLTLITLFCSLVCFISEVYVP) traverse the membrane as a helical segment. Residue 151–152 (PC) coordinates heme. Over 151 to 235 (PCNRVWYSDD…IYHSKNKRRS (85 aa)) the chain is Cytoplasmic. The chain crosses the membrane as a helical span at residues 236 to 256 (LFLWKLLFFNHWKLVALITIT). Residues 250 to 539 (VALITITKLI…LPTVISSLLE (290 aa)) form the ABC transmembrane type-1 1 domain. At 257-291 (KLIQDVLAFVQPTLIQKTILFISSYTSPNPESPSR) the chain is on the extracellular side. Residues 292 to 312 (GFIIAILVLVANFLQTLLLQQ) form a helical membrane-spanning segment. Residues 313 to 362 (YNQLIMLLGMRWKTELLASIYRKSLLLSSSARQNRSIGDIINYMAVDTQK) are Cytoplasmic-facing. Residues 363–383 (ISDLPIYLFIIVSGPFQIALA) form a helical membrane-spanning segment. Residues 384–394 (LSNLYHLMGYS) are Extracellular-facing. Residues 395–415 (AFTGVAASVILFPCNIIVANV) form a helical membrane-spanning segment. At 416-480 (YKKFQSILMK…KIGFITAIGD (65 aa)) the chain is on the cytoplasmic side. The helical transmembrane segment at 481 to 501 (FAWIFTTIIVTTVAFGAFIIF) threads the bilayer. Over 502-511 (HGKTQALTAD) the chain is Extracellular. Residues 512–532 (IVFPAVSLFNLLQFPLAMLPT) traverse the membrane as a helical segment. Over 533–899 (VISSLLEASV…VYWMYFKSCS (367 aa)) the chain is Cytoplasmic. The ABC transporter 1 domain maps to 575–804 (LEIKSGTFSW…TNSELKQQLS (230 aa)). 614–621 (GKVGAGKS) provides a ligand contact to ATP. Disordered regions lie at residues 805–824 (EFND…SYPS) and 840–869 (TYSS…TEDD). A helical transmembrane segment spans residues 900 to 920 (IGLILLYFFFIISGIMMNVAT). Positions 903-1189 (ILLYFFFIIS…IVQQSVDAEN (287 aa)) constitute an ABC transmembrane type-1 2 domain. Topologically, residues 921–939 (NVWLKHWSEENGKSSSELN) are extracellular. A helical membrane pass occupies residues 940–960 (PSPYFYLGIYLFFGFLSCAFI). Residues 961-1033 (SSSSLTMTVL…FFFRNSIQVL (73 aa)) are Cytoplasmic-facing. Residues 1034 to 1054 (FILGVICYSAPLSLLLIVPLF) traverse the membrane as a helical segment. The Extracellular portion of the chain corresponds to 1055 to 1465 (FLYLYNRAYY…YSLAKESGLI (411 aa)). In terms of domain architecture, ABC transporter 2 spans 1226 to 1460 (VSFNHYSAKY…KDSMFYSLAK (235 aa)). Residue 1260–1267 (GRTGAGKS) participates in ATP binding.

This sequence belongs to the ABC transporter superfamily.

The protein localises to the vacuole membrane. Functionally, iron-regulated vacuolar transporter that mobilizes stored heme from the vacuole to the cytosol in response to iron deficiency. The protein is Vacuolar heme ABC transmembrane exporter abc3 of Schizosaccharomyces pombe (strain 972 / ATCC 24843) (Fission yeast).